The following is a 765-amino-acid chain: Probable glycosyltransferase STELLO2 (765 aa).

At 1–43 (MLVQDRVAPKPPKSRIRELPSRDRFAEPKILDFSSWVSDNVYR) the chain is on the cytoplasmic side. The helical transmembrane segment at 44 to 64 (IVIIFLFIVTVAAFFFLYNTT) threads the bilayer. Residues 65–765 (DTASLLCFQS…EGDPLLMELV (701 aa)) are Lumenal-facing. 2 N-linked (GlcNAc...) asparagine glycosylation sites follow: Asn235 and Asn723.

Belongs to the STELLO family. As to quaternary structure, homo- and heterodimer with STL1. Interacts with CESA1, CESA3, CESA4, CESA6, CESA7 and CESA8, but not with GOT1. As to expression, expressed in cells that are expanding or producing secondary cell walls.

The protein localises to the golgi apparatus membrane. Functionally, probable glycosyltransferase regulating the assembly and trafficking of cellulose synthase complexes. The polypeptide is Probable glycosyltransferase STELLO2 (Arabidopsis thaliana (Mouse-ear cress)).